Here is a 185-residue protein sequence, read N- to C-terminus: Ribosome-recycling factor (185 aa).

Belongs to the RRF family.

Its subcellular location is the cytoplasm. In terms of biological role, responsible for the release of ribosomes from messenger RNA at the termination of protein biosynthesis. May increase the efficiency of translation by recycling ribosomes from one round of translation to another. This Sulfurovum sp. (strain NBC37-1) protein is Ribosome-recycling factor.